A 253-amino-acid polypeptide reads, in one-letter code: NAD(P)H-quinone oxidoreductase subunit K (253 aa).

The [4Fe-4S] cluster site is built by C68, C69, C133, and C164.

The protein belongs to the complex I 20 kDa subunit family. NDH-1 can be composed of about 15 different subunits; different subcomplexes with different compositions have been identified which probably have different functions. [4Fe-4S] cluster is required as a cofactor.

It is found in the cellular thylakoid membrane. It carries out the reaction a plastoquinone + NADH + (n+1) H(+)(in) = a plastoquinol + NAD(+) + n H(+)(out). The catalysed reaction is a plastoquinone + NADPH + (n+1) H(+)(in) = a plastoquinol + NADP(+) + n H(+)(out). NDH-1 shuttles electrons from an unknown electron donor, via FMN and iron-sulfur (Fe-S) centers, to quinones in the respiratory and/or the photosynthetic chain. The immediate electron acceptor for the enzyme in this species is believed to be plastoquinone. Couples the redox reaction to proton translocation, and thus conserves the redox energy in a proton gradient. Cyanobacterial NDH-1 also plays a role in inorganic carbon-concentration. The chain is NAD(P)H-quinone oxidoreductase subunit K from Synechococcus sp. (strain CC9311).